The sequence spans 296 residues: GTP-binding protein GEM (296 aa).

2 disordered regions span residues 1–20 (MTLN…PQQQ) and 37–68 (PHQY…SVIS). Low complexity predominate over residues 57–68 (SWSSDSTDSVIS). GTP is bound by residues 82 to 89 (GEQGVGKS) and 191 to 194 (NKSD). Residues 266–285 (ARRFWGKIVAKNNKNMAFKL) are calmodulin-binding.

The protein belongs to the small GTPase superfamily. RGK family. As to quaternary structure, interacts with calmodulin in a Ca(2+)-dependent manner. Binds ROCK1. Post-translationally, phosphorylated on tyrosine residues. In terms of tissue distribution, most abundant in thymus, spleen, kidney, lung, and testis. Less abundant in heart, brain, liver and skeletal muscle.

The protein localises to the cell membrane. Could be a regulatory protein, possibly participating in receptor-mediated signal transduction at the plasma membrane. Has guanine nucleotide-binding activity but undetectable intrinsic GTPase activity. This is GTP-binding protein GEM (GEM) from Homo sapiens (Human).